The primary structure comprises 179 residues: Photosystem I assembly protein Ycf4 (179 aa).

2 helical membrane passes run Leu-21 to Val-41 and Ile-59 to Ile-79.

It belongs to the Ycf4 family.

Its subcellular location is the plastid. The protein resides in the chloroplast thylakoid membrane. Its function is as follows. Seems to be required for the assembly of the photosystem I complex. The sequence is that of Photosystem I assembly protein Ycf4 from Rhodomonas salina (Cryptomonas salina).